A 306-amino-acid chain; its full sequence is Ribonuclease Z (306 aa).

7 residues coordinate Zn(2+): H63, H65, D67, H68, H142, D213, and H271. The active-site Proton acceptor is the D67.

It belongs to the RNase Z family. As to quaternary structure, homodimer. Zn(2+) serves as cofactor.

The catalysed reaction is Endonucleolytic cleavage of RNA, removing extra 3' nucleotides from tRNA precursor, generating 3' termini of tRNAs. A 3'-hydroxy group is left at the tRNA terminus and a 5'-phosphoryl group is left at the trailer molecule.. Its function is as follows. Zinc phosphodiesterase, which displays some tRNA 3'-processing endonuclease activity. Probably involved in tRNA maturation, by removing a 3'-trailer from precursor tRNA. The polypeptide is Ribonuclease Z (Oceanobacillus iheyensis (strain DSM 14371 / CIP 107618 / JCM 11309 / KCTC 3954 / HTE831)).